The chain runs to 248 residues: Protein LIFEGUARD 3 (248 aa).

Helical transmembrane passes span 42–62, 74–94, 105–125, 130–150, 165–185, 188–208, and 222–242; these read VYSI…TVVT, GLGL…LCPL, YLLL…TCAF, VILE…LYTF, FLFG…LFPL, VSVM…IVYD, and IWAA…LLTV.

The protein belongs to the BI1 family.

The protein localises to the membrane. The sequence is that of Protein LIFEGUARD 3 from Arabidopsis thaliana (Mouse-ear cress).